The primary structure comprises 225 residues: MIKMLEGYYIIENPGVVPAERRFRMKDLKAWGYDLHLGTIEGERAYFISKTGERHEGETYIFKGKEYHVSRTQKEIPENARLLARIIIERGNPYLEVWLEEEDVKFPLTKEDPRIILKRIWEKEKLNQLLKHVRAVGLTTDFYKDNVFTQGIPLPYEEYPPKVRRVLREVKDIHRDLTGFGRFVFQYFGEVDKMHNYRLYWTLPTLHLFDIDIANEVDKVLGMLD.

It belongs to the UPF0128 family.

The polypeptide is UPF0128 protein PH1314 (Pyrococcus horikoshii (strain ATCC 700860 / DSM 12428 / JCM 9974 / NBRC 100139 / OT-3)).